A 156-amino-acid polypeptide reads, in one-letter code: ATP synthase subunit b (156 aa).

Residues 7 to 29 form a helical membrane-spanning segment; sequence LIGQSVAFLIFVWFCMKFVWPPL.

This sequence belongs to the ATPase B chain family. As to quaternary structure, F-type ATPases have 2 components, F(1) - the catalytic core - and F(0) - the membrane proton channel. F(1) has five subunits: alpha(3), beta(3), gamma(1), delta(1), epsilon(1). F(0) has three main subunits: a(1), b(2) and c(10-14). The alpha and beta chains form an alternating ring which encloses part of the gamma chain. F(1) is attached to F(0) by a central stalk formed by the gamma and epsilon chains, while a peripheral stalk is formed by the delta and b chains.

The protein resides in the cell inner membrane. F(1)F(0) ATP synthase produces ATP from ADP in the presence of a proton or sodium gradient. F-type ATPases consist of two structural domains, F(1) containing the extramembraneous catalytic core and F(0) containing the membrane proton channel, linked together by a central stalk and a peripheral stalk. During catalysis, ATP synthesis in the catalytic domain of F(1) is coupled via a rotary mechanism of the central stalk subunits to proton translocation. Its function is as follows. Component of the F(0) channel, it forms part of the peripheral stalk, linking F(1) to F(0). The polypeptide is ATP synthase subunit b (Shewanella denitrificans (strain OS217 / ATCC BAA-1090 / DSM 15013)).